We begin with the raw amino-acid sequence, 224 residues long: MKILWIGRTQYAEAWRLMKSLHCAVAQGLTGDIALVTEHEPVVTVGKHGRLNNVIKWDVPVYLVERGGDATYHGPGQAVVYPIVALRWPLKRYIDAIEDAVIKTLGTYGILAGKKQGHRGVWVGDRKIASIGIAVENNVAYHGVAINVTIDPREFARINPCGLPASTMISMKELGVVAEVRDVGIETAKKLALELGLTPELISKPPEVPQVAEELKPVRVAINA.

Positions 28–199 (GLTGDIALVT…KLALELGLTP (172 aa)) constitute a BPL/LPL catalytic domain. Substrate-binding positions include 66–73 (RGGDATYH), 130–132 (SIG), and 143–145 (GVA). C161 serves as the catalytic Acyl-thioester intermediate.

It belongs to the LipB family.

The protein resides in the cytoplasm. The catalysed reaction is octanoyl-[ACP] + L-lysyl-[protein] = N(6)-octanoyl-L-lysyl-[protein] + holo-[ACP] + H(+). It participates in protein modification; protein lipoylation via endogenous pathway; protein N(6)-(lipoyl)lysine from octanoyl-[acyl-carrier-protein]: step 1/2. Catalyzes the transfer of endogenously produced octanoic acid from octanoyl-acyl-carrier-protein onto the lipoyl domains of lipoate-dependent enzymes. Lipoyl-ACP can also act as a substrate although octanoyl-ACP is likely to be the physiological substrate. The protein is Probable octanoyltransferase of Pyrobaculum aerophilum (strain ATCC 51768 / DSM 7523 / JCM 9630 / CIP 104966 / NBRC 100827 / IM2).